The following is a 194-amino-acid chain: Inosine triphosphate pyrophosphatase (194 aa).

10 to 15 (TGNANK) contacts ITP. A Mg(2+)-binding site is contributed by glutamate 41. ITP-binding positions include lysine 54, 72 to 73 (DT), lysine 89, 147 to 150 (FGWD), lysine 172, and 177 to 178 (QR).

The protein belongs to the HAM1 NTPase family. Homodimer. It depends on Mg(2+) as a cofactor. Requires Mn(2+) as cofactor.

The protein resides in the cytoplasm. It localises to the nucleus. The enzyme catalyses ITP + H2O = IMP + diphosphate + H(+). It catalyses the reaction dITP + H2O = dIMP + diphosphate + H(+). The catalysed reaction is XTP + H2O = XMP + diphosphate + H(+). Functionally, pyrophosphatase that hydrolyzes non-canonical purine nucleotides such as inosine triphosphate (ITP), deoxyinosine triphosphate (dITP) or xanthosine 5'-triphosphate (XTP) to their respective monophosphate derivatives. The enzyme does not distinguish between the deoxy- and ribose forms. Probably excludes non-canonical purines from RNA and DNA precursor pools, thus preventing their incorporation into RNA and DNA and avoiding chromosomal lesions. In Kluyveromyces lactis (strain ATCC 8585 / CBS 2359 / DSM 70799 / NBRC 1267 / NRRL Y-1140 / WM37) (Yeast), this protein is Inosine triphosphate pyrophosphatase.